Reading from the N-terminus, the 572-residue chain is Pentatricopeptide repeat-containing protein At1g26900, mitochondrial (572 aa).

A mitochondrion-targeting transit peptide spans 1–117; it reads MTLAITSRLR…RAFSVFNQLR (117 aa). PPR repeat units follow at residues 89-123, 124-158, 159-189, 191-225, 226-260, 261-291, 292-326, 327-361, 362-392, 393-427, 430-460, and 466-496; these read NLFM…GLTL, DRFS…GFMV, FTDL…MPQS, DAVT…EVVV, NVST…GLDL, DLHL…AIRK, DVVT…KMKP, NSST…RIAL, DAIL…MKDK, DVKS…NCKV, NEIT…MVEA, and KVEH…LPIT. The tract at residues 501 to 572 is type E motif; sequence AWRALLAACR…EAGYSAIEIE (72 aa).

It belongs to the PPR family. PCMP-E subfamily.

It is found in the mitochondrion. This Arabidopsis thaliana (Mouse-ear cress) protein is Pentatricopeptide repeat-containing protein At1g26900, mitochondrial (PCMP-E54).